A 207-amino-acid polypeptide reads, in one-letter code: Low-molecular weight cobalt-containing nitrile hydratase subunit alpha (207 aa).

Residues Cys109, Cys112, Ser113, and Cys114 each coordinate Co(3+).

The protein belongs to the nitrile hydratase subunit alpha family. Heterodimer of an alpha and a beta chain. Co(3+) serves as cofactor.

It carries out the reaction an aliphatic primary amide = an aliphatic nitrile + H2O. In terms of biological role, NHase catalyzes the hydration of various nitrile compounds to the corresponding amides. The sequence is that of Low-molecular weight cobalt-containing nitrile hydratase subunit alpha from Rhodococcus rhodochrous.